We begin with the raw amino-acid sequence, 300 residues long: Cell adhesion molecule CEACAM19 (300 aa).

The first 32 residues, 1–32 (MEIPMGTQGCFSKSLLLSASILVLWMLQGSQA), serve as a signal peptide directing secretion. Over 33–157 (ALYIQKIPEQ…PSTHLPTNAG (125 aa)) the chain is Extracellular. Residue Asn-104 is glycosylated (N-linked (GlcNAc...) asparagine). A helical transmembrane segment spans residues 158 to 178 (ILAATIIGSLAAGALLISCIA). Residues 179-300 (YLLVTRNWRG…APYCQLVPTS (122 aa)) lie on the Cytoplasmic side of the membrane. Residues 259-291 (SINPARPLPTPPHLQAEPENHQYQQDLLNPDPA) form a disordered region.

It belongs to the immunoglobulin superfamily. CEA family. Ubiquitous with highest expression in prostate, uterus, fetal brain, mammary gland, adrenal gland, skeletal muscle, small intestine, and kidney, and lower expression in lung, cerebellum, testis, liver, pancreas, bone marrow and ovary.

Its subcellular location is the membrane. The sequence is that of Cell adhesion molecule CEACAM19 from Homo sapiens (Human).